The primary structure comprises 286 residues: 4-diphosphocytidyl-2-C-methyl-D-erythritol kinase (286 aa).

Residue Lys-12 is part of the active site. An ATP-binding site is contributed by 96–106 (PHGAGLGGGSA). Asp-138 is a catalytic residue.

This sequence belongs to the GHMP kinase family. IspE subfamily.

The enzyme catalyses 4-CDP-2-C-methyl-D-erythritol + ATP = 4-CDP-2-C-methyl-D-erythritol 2-phosphate + ADP + H(+). The protein operates within isoprenoid biosynthesis; isopentenyl diphosphate biosynthesis via DXP pathway; isopentenyl diphosphate from 1-deoxy-D-xylulose 5-phosphate: step 3/6. Catalyzes the phosphorylation of the position 2 hydroxy group of 4-diphosphocytidyl-2C-methyl-D-erythritol. The protein is 4-diphosphocytidyl-2-C-methyl-D-erythritol kinase of Nitratidesulfovibrio vulgaris (strain DP4) (Desulfovibrio vulgaris).